The chain runs to 239 residues: SKA complex subunit 1 (239 aa).

The segment at 87–115 (PDSVPQKSTRPCLDDEKEGSSVVQPPESG) is disordered. Positions 116-239 (NRHVQLISEQ…RCGPLTFYYA (124 aa)) are microtubule binding.

It belongs to the SKA1 family. As to quaternary structure, component of the SKA complex, composed of two copies of ska-1 and a single copy of ska-3. The core complex associates with microtubules and may form dimeric assemblies. Interacts with ska-3 and microtubules.

The protein resides in the cytoplasm. The protein localises to the cytoskeleton. Its subcellular location is the spindle. It is found in the chromosome. It localises to the centromere. The protein resides in the kinetochore. Functionally, component of the SKA complex, a microtubule plus end-binding complex of the outer kinetochore that stabilizes spindle microtubule-kinetochore attachments, promotes alignment of chromosomes at the mitotic spindle equator (chromosome congression) and assists suppression of the spindle assembly checkpoint. Kinetochores, consisting of a centromere-associated inner segment and a microtubule-contacting outer segment, play a crucial role in chromosome segregation by mediating the physical connection between centromeric DNA and spindle microtubules. The outer kinetochore is made up of the ten-subunit KMN network complex, comprising the MIS12, NDC80 and KNL1 complexes, and auxiliary microtubule-associated components such as the SKA complex; together they connect the outer kinetochore with the inner kinetochore, bind microtubules, and mediate interactions with mitotic checkpoint proteins that delay anaphase until chromosomes are bioriented on the spindle. The SKA complex is loaded onto bioriented kinetochores and it facilitates chromosome congression by stabilizing microtubules and end-on attachment of the NDC80 complex to depolymerizing spindle microtubules, thereby assisting the poleward-moving kinetochore in withstanding microtubule pulling forces. The complex associates with dynamic microtubule plus-ends and can track both depolymerizing and elongating microtubules. The complex recruits protein phosphatase 1 (PP1) to the kinetochore in prometaphase and metaphase, to oppose spindle assembly checkpoint signaling and promote the onset of anaphase. In the complex, it mediates interactions with microtubules. During meiosis the SKA complex stabilizes the meiotic spindle and is required for its migration to the cortex. This is SKA complex subunit 1 from Caenorhabditis briggsae.